The primary structure comprises 712 residues: DNA ligase (712 aa).

NAD(+)-binding positions include Asp53–Asp57, Ser103–Leu104, and Glu133. Lys135 serves as the catalytic N6-AMP-lysine intermediate. Positions 156, 196, 315, and 339 each coordinate NAD(+). Positions 433, 436, 452, and 458 each coordinate Zn(2+). Residues Ser622–Pro711 form the BRCT domain.

This sequence belongs to the NAD-dependent DNA ligase family. LigA subfamily. Requires Mg(2+) as cofactor. Mn(2+) serves as cofactor.

It catalyses the reaction NAD(+) + (deoxyribonucleotide)n-3'-hydroxyl + 5'-phospho-(deoxyribonucleotide)m = (deoxyribonucleotide)n+m + AMP + beta-nicotinamide D-nucleotide.. DNA ligase that catalyzes the formation of phosphodiester linkages between 5'-phosphoryl and 3'-hydroxyl groups in double-stranded DNA using NAD as a coenzyme and as the energy source for the reaction. It is essential for DNA replication and repair of damaged DNA. The polypeptide is DNA ligase (Mycolicibacterium gilvum (strain PYR-GCK) (Mycobacterium gilvum (strain PYR-GCK))).